The primary structure comprises 293 residues: UDP-3-O-acyl-N-acetylglucosamine deacetylase (293 aa).

Residues His-79, His-236, and Asp-240 each contribute to the Zn(2+) site. His-263 (proton donor) is an active-site residue.

The protein belongs to the LpxC family. Zn(2+) is required as a cofactor.

The catalysed reaction is a UDP-3-O-[(3R)-3-hydroxyacyl]-N-acetyl-alpha-D-glucosamine + H2O = a UDP-3-O-[(3R)-3-hydroxyacyl]-alpha-D-glucosamine + acetate. It functions in the pathway glycolipid biosynthesis; lipid IV(A) biosynthesis; lipid IV(A) from (3R)-3-hydroxytetradecanoyl-[acyl-carrier-protein] and UDP-N-acetyl-alpha-D-glucosamine: step 2/6. In terms of biological role, catalyzes the hydrolysis of UDP-3-O-myristoyl-N-acetylglucosamine to form UDP-3-O-myristoylglucosamine and acetate, the committed step in lipid A biosynthesis. This is UDP-3-O-acyl-N-acetylglucosamine deacetylase from Phenylobacterium zucineum (strain HLK1).